A 158-amino-acid chain; its full sequence is Lipoprotein signal peptidase (158 aa).

4 helical membrane passes run 7 to 27, 38 to 58, 67 to 87, and 95 to 115; these read LFWI…YWVV, ILPG…FSLF, WLSL…PVLD, and GLIL…GYVV. Residues aspartate 116 and aspartate 132 contribute to the active site. The helical transmembrane segment at 125 to 145 threads the bilayer; it reads FAVFNMADSFISIGIVCLLLA.

The protein belongs to the peptidase A8 family.

The protein localises to the cell inner membrane. The catalysed reaction is Release of signal peptides from bacterial membrane prolipoproteins. Hydrolyzes -Xaa-Yaa-Zaa-|-(S,diacylglyceryl)Cys-, in which Xaa is hydrophobic (preferably Leu), and Yaa (Ala or Ser) and Zaa (Gly or Ala) have small, neutral side chains.. It participates in protein modification; lipoprotein biosynthesis (signal peptide cleavage). This protein specifically catalyzes the removal of signal peptides from prolipoproteins. The sequence is that of Lipoprotein signal peptidase from Nostoc sp. (strain PCC 7120 / SAG 25.82 / UTEX 2576).